Here is a 257-residue protein sequence, read N- to C-terminus: Golgi SNAP receptor complex member 1-2 (257 aa).

Over methionine 1–aspartate 235 the chain is Cytoplasmic. Asparagine 51 bears the Phosphoserine mark. A coiled-coil region spans residues threonine 113–leucine 147. The helical; Anchor for type IV membrane protein transmembrane segment at threonine 236–serine 256 threads the bilayer. Position 257 (lysine 257) is a topological domain, vesicular.

The protein belongs to the GOSR1 family. In terms of assembly, component of several multiprotein Golgi SNARE complexes.

The protein localises to the golgi apparatus membrane. Its subcellular location is the endoplasmic reticulum membrane. In terms of biological role, involved in transport from the ER to the Golgi apparatus as well as in intra-Golgi transport. It belongs to a super-family of proteins called t-SNAREs or soluble NSF (N-ethylmaleimide-sensitive factor) attachment protein receptor. The protein is Golgi SNAP receptor complex member 1-2 (GOS12) of Arabidopsis thaliana (Mouse-ear cress).